Reading from the N-terminus, the 149-residue chain is Cytochrome c oxidase subunit 5A, mitochondrial (149 aa).

It belongs to the cytochrome c oxidase subunit 5A family. As to quaternary structure, component of the cytochrome c oxidase (complex IV, CIV), a multisubunit enzyme composed of a catalytic core of 3 subunits and several supernumerary subunits. The complex exists as a monomer or a dimer and forms supercomplexes (SCs) in the inner mitochondrial membrane with ubiquinol-cytochrome c oxidoreductase (cytochrome b-c1 complex, complex III, CIII).

The protein resides in the mitochondrion inner membrane. Its pathway is energy metabolism; oxidative phosphorylation. In terms of biological role, component of the cytochrome c oxidase, the last enzyme in the mitochondrial electron transport chain which drives oxidative phosphorylation. The respiratory chain contains 3 multisubunit complexes succinate dehydrogenase (complex II, CII), ubiquinol-cytochrome c oxidoreductase (cytochrome b-c1 complex, complex III, CIII) and cytochrome c oxidase (complex IV, CIV), that cooperate to transfer electrons derived from NADH and succinate to molecular oxygen, creating an electrochemical gradient over the inner membrane that drives transmembrane transport and the ATP synthase. Cytochrome c oxidase is the component of the respiratory chain that catalyzes the reduction of oxygen to water. Electrons originating from reduced cytochrome c in the intermembrane space (IMS) are transferred via the dinuclear copper A center (CU(A)) of subunit 2 and heme A of subunit 1 to the active site in subunit 1, a binuclear center (BNC) formed by heme A3 and copper B (CU(B)). The BNC reduces molecular oxygen to 2 water molecules using 4 electrons from cytochrome c in the IMS and 4 protons from the mitochondrial matrix. This Drosophila melanogaster (Fruit fly) protein is Cytochrome c oxidase subunit 5A, mitochondrial.